Consider the following 220-residue polypeptide: Aspartic protease inhibitor 4 (220 aa).

Residues 1-23 form the signal peptide; it reads MMKCLFLLCLCLLPILVFSSTFT. Residues 24–32 constitute a propeptide that is removed on maturation; it reads SQNPINLPS. The Vacuolar targeting signal motif lies at 26–31; the sequence is NPINLP. An N-linked (GlcNAc...) asparagine glycan is attached at Asn51. 2 cysteine pairs are disulfide-bonded: Cys80/Cys125 and Cys174/Cys185.

This sequence belongs to the protease inhibitor I3 (leguminous Kunitz-type inhibitor) family. Tubers.

The protein localises to the vacuole. Inhibits tightly cathepsin D (aspartic protease) and weakly trypsin (serine protease). May protect the plant by inhibiting proteases of invading organisms. The chain is Aspartic protease inhibitor 4 from Solanum tuberosum (Potato).